A 136-amino-acid chain; its full sequence is UPF0225 protein Pnap_0466 (136 aa).

Belongs to the UPF0225 family.

The protein is UPF0225 protein Pnap_0466 of Polaromonas naphthalenivorans (strain CJ2).